The chain runs to 150 residues: Large ribosomal subunit protein uL15 (150 aa).

The tract at residues Ala-12–Gly-43 is disordered. A compositionally biased stretch (basic residues) spans Thr-30 to Lys-39.

Belongs to the universal ribosomal protein uL15 family. As to quaternary structure, part of the 50S ribosomal subunit.

Functionally, binds to the 23S rRNA. The chain is Large ribosomal subunit protein uL15 from Methylacidiphilum infernorum (isolate V4) (Methylokorus infernorum (strain V4)).